The chain runs to 599 residues: Elongation factor 4 (599 aa).

Residues 5–187 (SHIRNFSIIA…HLVRVIPPPQ (183 aa)) enclose the tr-type G domain. GTP contacts are provided by residues 17–22 (DHGKST) and 134–137 (NKMD).

The protein belongs to the TRAFAC class translation factor GTPase superfamily. Classic translation factor GTPase family. LepA subfamily.

The protein localises to the cell inner membrane. The catalysed reaction is GTP + H2O = GDP + phosphate + H(+). Required for accurate and efficient protein synthesis under certain stress conditions. May act as a fidelity factor of the translation reaction, by catalyzing a one-codon backward translocation of tRNAs on improperly translocated ribosomes. Back-translocation proceeds from a post-translocation (POST) complex to a pre-translocation (PRE) complex, thus giving elongation factor G a second chance to translocate the tRNAs correctly. Binds to ribosomes in a GTP-dependent manner. The protein is Elongation factor 4 of Azotobacter vinelandii (strain DJ / ATCC BAA-1303).